The following is a 201-amino-acid chain: Small ribosomal subunit protein uS4 (201 aa).

Residues 1–45 are disordered; sequence MARYTGPLTKKSRRLGTDLVGNDKSFERRPYPPGVHGRGRTKDSE. Residues 91-157 enclose the S4 RNA-binding domain; it reads SRLDNVVYRA…PPIVIARETF (67 aa).

This sequence belongs to the universal ribosomal protein uS4 family. Part of the 30S ribosomal subunit. Contacts protein S5. The interaction surface between S4 and S5 is involved in control of translational fidelity.

Functionally, one of the primary rRNA binding proteins, it binds directly to 16S rRNA where it nucleates assembly of the body of the 30S subunit. In terms of biological role, with S5 and S12 plays an important role in translational accuracy. In Cutibacterium acnes (strain DSM 16379 / KPA171202) (Propionibacterium acnes), this protein is Small ribosomal subunit protein uS4.